Reading from the N-terminus, the 477-residue chain is Tyrosine--tRNA ligase, mitochondrial (477 aa).

Residues 1–16 constitute a mitochondrion transit peptide; sequence MAAPILRSFSWGRWSG. Tyr-77 contacts L-tyrosine. Residue Asp-81 participates in ATP binding. A 'HIGH' region motif is present at residues 82–91; the sequence is PTADSLHVGH. Residues Asp-121, Tyr-221, Gln-225, and Asp-228 each contribute to the L-tyrosine site. Position 244–246 (244–246) interacts with ATP; that stretch reads GSD. Gln-247 lines the L-tyrosine pocket. Positions 274 and 284 each coordinate ATP. A 'KMSKS' region motif is present at residues 281–285; it reads KLGKS. Residues Lys-355 and Lys-367 each carry the N6-acetyllysine modification.

Belongs to the class-I aminoacyl-tRNA synthetase family. As to quaternary structure, homodimer.

The protein localises to the mitochondrion matrix. It carries out the reaction tRNA(Tyr) + L-tyrosine + ATP = L-tyrosyl-tRNA(Tyr) + AMP + diphosphate + H(+). Its function is as follows. Catalyzes the attachment of tyrosine to tRNA(Tyr) in a two-step reaction: tyrosine is first activated by ATP to form Tyr-AMP and then transferred to the acceptor end of tRNA(Tyr). The chain is Tyrosine--tRNA ligase, mitochondrial (YARS2) from Homo sapiens (Human).